The chain runs to 811 residues: Lysine-specific histone demethylase 1 homolog 3 (811 aa).

Residues 1-10 show a composition bias toward pro residues; it reads MSDQPPPYTP. The tract at residues 1-79 is disordered; sequence MSDQPPPYTP…PSAQPPPRAS (79 aa). Residues 44 to 55 show a composition bias toward basic residues; sequence NKRKRTGFRRKL. Positions 56 to 71 are enriched in low complexity; it reads PSGSPAAPVAVAASPS. In terms of domain architecture, SWIRM spans 88–189; the sequence is NREPTAEAVT…FGVAPAIKER (102 aa). FAD contacts are provided by Glu227, Arg229, Arg235, and Glu609. The interval 790 to 811 is disordered; it reads RNSSRTKTRPSKLKIGIPKSKS.

The protein belongs to the flavin monoamine oxidase family. The cofactor is FAD.

Its function is as follows. Probable histone demethylase. This chain is Lysine-specific histone demethylase 1 homolog 3, found in Oryza sativa subsp. indica (Rice).